The primary structure comprises 500 residues: Cysteine--tRNA ligase (500 aa).

Residue Cys-29 participates in Zn(2+) binding. Residues 31–41 carry the 'HIGH' region motif; that stretch reads VTVYDLCHLGH. Residues Cys-213, His-238, and Glu-242 each coordinate Zn(2+). A 'KMSKS' region motif is present at residues 270–274; sequence KMSKS. Position 273 (Lys-273) interacts with ATP.

This sequence belongs to the class-I aminoacyl-tRNA synthetase family. Monomer. The cofactor is Zn(2+).

Its subcellular location is the cytoplasm. It catalyses the reaction tRNA(Cys) + L-cysteine + ATP = L-cysteinyl-tRNA(Cys) + AMP + diphosphate. The sequence is that of Cysteine--tRNA ligase from Prochlorococcus marinus (strain NATL2A).